A 287-amino-acid chain; its full sequence is Lactamase-like protein nscB (287 aa).

Zn(2+)-binding residues include His-62, His-64, Asp-66, and His-67. Asp-66 acts as the Proton donor/acceptor in catalysis.

Belongs to the metallo-beta-lactamase superfamily. The cofactor is Zn(2+).

It participates in secondary metabolite biosynthesis. Functionally, lactamase-like protein; part of the gene cluster that mediates the biosynthesis of neosartoricin B, a prenylated anthracenone that probably exhibits T-cell antiproliferative activity, suggestive of a physiological role as an immunosuppressive agent. The non-reducing polyketide synthase nscA probably synthesizes and cyclizes the decaketide backbone. The hydrolase nscB then mediates the product release through hydrolysis followed by spontaneous decarboxylation. The prenyltransferase nscD catalyzes the addition of the dimethylallyl group to the aromatic C5. The FAD-dependent monooxygenase nscC is then responsible for the stereospecific hydroxylation at C2. Neosartoricin B can be converted into two additional compounds neosartoricins C and D. Neosartoricin C is a spirocyclic compound that is cyclized through the attack of C3 hydroxyl on C14, followed by dehydration. On the other hand, neosartoricin D is a further cyclized compound in which attack of C2 on C14 in neosartoricin C results in the formation of the acetal-containing dioxabicyclo-octanone ring. Both of these compounds are novel and possibly represent related metabolites of the gene cluster. The sequence is that of Lactamase-like protein nscB from Trichophyton verrucosum (strain HKI 0517).